The following is a 211-amino-acid chain: Large ribosomal subunit protein eL13 (211 aa).

The protein belongs to the eukaryotic ribosomal protein eL13 family. As to quaternary structure, component of the 60S large ribosomal subunit (LSU).

The protein resides in the cytoplasm. Component of the ribosome, a large ribonucleoprotein complex responsible for the synthesis of proteins in the cell. The small ribosomal subunit (SSU) binds messenger RNAs (mRNAs) and translates the encoded message by selecting cognate aminoacyl-transfer RNA (tRNA) molecules. The large subunit (LSU) contains the ribosomal catalytic site termed the peptidyl transferase center (PTC), which catalyzes the formation of peptide bonds, thereby polymerizing the amino acids delivered by tRNAs into a polypeptide chain. The nascent polypeptides leave the ribosome through a tunnel in the LSU and interact with protein factors that function in enzymatic processing, targeting, and the membrane insertion of nascent chains at the exit of the ribosomal tunnel. As part of the LSU, it is probably required for its formation and the maturation of rRNAs. The protein is Large ribosomal subunit protein eL13 (rpl13) of Ictalurus punctatus (Channel catfish).